We begin with the raw amino-acid sequence, 458 residues long: ATP synthase subunit beta (458 aa).

148–155 contributes to the ATP binding site; that stretch reads GGAGVGKT.

The protein belongs to the ATPase alpha/beta chains family. F-type ATPases have 2 components, CF(1) - the catalytic core - and CF(0) - the membrane proton channel. CF(1) has five subunits: alpha(3), beta(3), gamma(1), delta(1), epsilon(1). CF(0) has three main subunits: a(1), b(2) and c(9-12). The alpha and beta chains form an alternating ring which encloses part of the gamma chain. CF(1) is attached to CF(0) by a central stalk formed by the gamma and epsilon chains, while a peripheral stalk is formed by the delta and b chains.

Its subcellular location is the cell inner membrane. It catalyses the reaction ATP + H2O + 4 H(+)(in) = ADP + phosphate + 5 H(+)(out). In terms of biological role, produces ATP from ADP in the presence of a proton gradient across the membrane. The catalytic sites are hosted primarily by the beta subunits. The chain is ATP synthase subunit beta from Halorhodospira halophila (strain DSM 244 / SL1) (Ectothiorhodospira halophila (strain DSM 244 / SL1)).